The primary structure comprises 749 residues: Phosphate-regulating neutral endopeptidase PHEX (749 aa).

Over 1–20 (MEAETGSSVETGKKANRGTR) the chain is Cytoplasmic. A helical; Signal-anchor for type II membrane protein membrane pass occupies residues 21–41 (IALVVFVGGTLVLGTILFLVS). Residues 42–641 (QGLLSLQAKQ…LNVKGKRTLG (600 aa)) are Extracellular-facing. One can recognise a Peptidase M13 domain in the interval 53–749 (YCLKPECIEA…NRGMDSCRLW (697 aa)). A disulfide bond links Cys54 and Cys59. Residues Asn71, Asn238, Asn263, Asn290, Asn301, Asn377, and Asn484 are each glycosylated (N-linked (GlcNAc...) asparagine). Disulfide bonds link Cys77/Cys733, Cys85/Cys693, Cys142/Cys406, and Cys617/Cys746. A Zn(2+)-binding site is contributed by His580. The active site involves Glu581. Positions 584 and 642 each coordinate Zn(2+). Catalysis depends on Asp646, which acts as the Proton donor. Residue Asn736 is glycosylated (N-linked (GlcNAc...) asparagine).

It belongs to the peptidase M13 family. Interacts with MEPE; the interaction is zinc-dependent (via ASARM motif). Requires Zn(2+) as cofactor. In terms of tissue distribution, specifically expressed in ovary. Expressed at low levels in kidney.

Its subcellular location is the cell membrane. Peptidase that cleaves SIBLING (small integrin-binding ligand, N-linked glycoprotein)-derived ASARM peptides, thus regulating their biological activity. Cleaves ASARM peptides between Ser and Glu or Asp residues. Regulates osteogenic cell differentiation and bone mineralization through the cleavage of the MEPE-derived ASARM peptide. Promotes dentin mineralization and renal phosphate reabsorption by cleaving DMP1- and MEPE-derived ASARM peptides. Inhibits the cleavage of MEPE by CTSB/cathepsin B thus preventing MEPE degradation. This is Phosphate-regulating neutral endopeptidase PHEX (PHEX) from Homo sapiens (Human).